Here is a 229-residue protein sequence, read N- to C-terminus: Heptaprenylglyceryl phosphate synthase (229 aa).

Asp13 and Thr39 together coordinate Mg(2+).

It belongs to the GGGP/HepGP synthase family. Homodimer. Requires Mg(2+) as cofactor.

It catalyses the reaction sn-glycerol 1-phosphate + all-trans-heptaprenyl diphosphate = 3-heptaprenyl-sn-glycero-1-phosphate + diphosphate. It participates in membrane lipid metabolism; glycerophospholipid metabolism. Functionally, prenyltransferase that catalyzes in vivo the transfer of the heptaprenyl moiety of heptaprenyl pyrophosphate (HepPP; 35 carbon atoms) to the C3 hydroxyl of sn-glycerol-1-phosphate (G1P), producing heptaprenylglyceryl phosphate (HepGP). This reaction is an ether-bond-formation step in the biosynthesis of archaea-type G1P-based membrane lipids found in Bacillales. The sequence is that of Heptaprenylglyceryl phosphate synthase from Lysinibacillus sphaericus (strain C3-41).